The chain runs to 252 residues: MTTIDLNSDLGESYGSWVMGNDVAVLDLVSSANIACGFHAGDATVLFKTVRAAHARHVRIGAHIGYNDIAGFGRRNLDIAHDDLVAETIYQIGAIQAAAKASGAVVEYVKPHGALYNTIAVDEAQAAAVIEGIKLVNPELSLMALAGSQIVEQARAVGLQVEQETFADRAYTADGQLVSRKLPGAVLHDPETAARQALAFATGQPITAITGESVLVDANSICVHGDNPQALALVEKIVTTLAAHEVQVSHAR.

Belongs to the LamB/PxpA family. In terms of assembly, forms a complex composed of PxpA, PxpB and PxpC.

The catalysed reaction is 5-oxo-L-proline + ATP + 2 H2O = L-glutamate + ADP + phosphate + H(+). Functionally, catalyzes the cleavage of 5-oxoproline to form L-glutamate coupled to the hydrolysis of ATP to ADP and inorganic phosphate. The polypeptide is 5-oxoprolinase subunit A (Corynebacterium glutamicum (strain ATCC 13032 / DSM 20300 / JCM 1318 / BCRC 11384 / CCUG 27702 / LMG 3730 / NBRC 12168 / NCIMB 10025 / NRRL B-2784 / 534)).